The chain runs to 485 residues: Aspartyl protease family protein 2 (485 aa).

An N-terminal signal peptide occupies residues 1 to 23 (MVGRRKALLFSLCFFFLSLPSFS). The interval 43-71 (PVSFQPDSDSESLLESEFESGSDSESSSS) is disordered. A compositionally biased stretch (acidic residues) spans 50 to 64 (SDSESLLESEFESGS). In terms of domain architecture, Peptidase A1 spans 142-480 (YFTRLGVGTP…DLASSRVGFA (339 aa)). Catalysis depends on residues aspartate 160 and aspartate 365.

This sequence belongs to the peptidase A1 family.

Aspartyl protease. Not able to cleave BAG6. In Arabidopsis thaliana (Mouse-ear cress), this protein is Aspartyl protease family protein 2.